The sequence spans 252 residues: Thiazole synthase (252 aa).

Catalysis depends on Lys-98, which acts as the Schiff-base intermediate with DXP. Residues Gly-159, Ala-185–Gly-186, and Ala-207–Ser-208 each bind 1-deoxy-D-xylulose 5-phosphate.

Belongs to the ThiG family. Homotetramer. Forms heterodimers with either ThiH or ThiS.

It localises to the cytoplasm. The catalysed reaction is [ThiS sulfur-carrier protein]-C-terminal-Gly-aminoethanethioate + 2-iminoacetate + 1-deoxy-D-xylulose 5-phosphate = [ThiS sulfur-carrier protein]-C-terminal Gly-Gly + 2-[(2R,5Z)-2-carboxy-4-methylthiazol-5(2H)-ylidene]ethyl phosphate + 2 H2O + H(+). The protein operates within cofactor biosynthesis; thiamine diphosphate biosynthesis. In terms of biological role, catalyzes the rearrangement of 1-deoxy-D-xylulose 5-phosphate (DXP) to produce the thiazole phosphate moiety of thiamine. Sulfur is provided by the thiocarboxylate moiety of the carrier protein ThiS. In vitro, sulfur can be provided by H(2)S. The polypeptide is Thiazole synthase (Mycobacterium tuberculosis (strain ATCC 25177 / H37Ra)).